We begin with the raw amino-acid sequence, 428 residues long: Dihydroorotase (428 aa).

Positions 60 and 62 each coordinate Zn(2+). Substrate-binding positions include 62-64 (HLR) and asparagine 94. 3 residues coordinate Zn(2+): aspartate 152, histidine 179, and histidine 232. Substrate is bound at residue asparagine 278. Aspartate 305 is a binding site for Zn(2+). Aspartate 305 is a catalytic residue. Residue histidine 309 coordinates substrate.

The protein belongs to the metallo-dependent hydrolases superfamily. DHOase family. Class I DHOase subfamily. It depends on Zn(2+) as a cofactor.

It carries out the reaction (S)-dihydroorotate + H2O = N-carbamoyl-L-aspartate + H(+). Its pathway is pyrimidine metabolism; UMP biosynthesis via de novo pathway; (S)-dihydroorotate from bicarbonate: step 3/3. In terms of biological role, catalyzes the reversible cyclization of carbamoyl aspartate to dihydroorotate. This chain is Dihydroorotase, found in Ruminiclostridium cellulolyticum (strain ATCC 35319 / DSM 5812 / JCM 6584 / H10) (Clostridium cellulolyticum).